A 513-amino-acid chain; its full sequence is Maturase K (513 aa).

This sequence belongs to the intron maturase 2 family. MatK subfamily.

The protein localises to the plastid. The protein resides in the chloroplast. Functionally, usually encoded in the trnK tRNA gene intron. Probably assists in splicing its own and other chloroplast group II introns. The sequence is that of Maturase K from Eleusine indica (Goosegrass).